A 341-amino-acid chain; its full sequence is Methionine import ATP-binding protein MetN 3 (341 aa).

Residues 2–241 enclose the ABC transporter domain; that stretch reads ILLENVKKIY…PQQDITKRFV (240 aa). Position 38–45 (38–45) interacts with ATP; that stretch reads GYSGAGKS.

The protein belongs to the ABC transporter superfamily. Methionine importer (TC 3.A.1.24) family. As to quaternary structure, the complex is composed of two ATP-binding proteins (MetN), two transmembrane proteins (MetI) and a solute-binding protein (MetQ).

The protein resides in the cell membrane. It catalyses the reaction L-methionine(out) + ATP + H2O = L-methionine(in) + ADP + phosphate + H(+). It carries out the reaction D-methionine(out) + ATP + H2O = D-methionine(in) + ADP + phosphate + H(+). In terms of biological role, part of the ABC transporter complex MetNIQ involved in methionine import. Responsible for energy coupling to the transport system. This Bacillus cereus (strain ZK / E33L) protein is Methionine import ATP-binding protein MetN 3.